Reading from the N-terminus, the 186-residue chain is Mitochondrial import inner membrane translocase subunit Tim22 (186 aa).

2 disulfides stabilise this stretch: Cys61-Cys133 and Cys152-Cys171. 3 consecutive transmembrane segments (helical) span residues 66 to 86, 117 to 135, and 162 to 182; these read ALAC…TAGI, YAKN…ECLV, and AGLK…AVID.

It belongs to the Tim17/Tim22/Tim23 family. Core component of the TIM22 complex.

It is found in the mitochondrion inner membrane. Functionally, essential core component of the TIM22 complex, a complex that mediates the import and insertion of multi-pass transmembrane proteins into the mitochondrial inner membrane. In the TIM22 complex, it constitutes the voltage-activated and signal-gated channel. Forms a twin-pore translocase that uses the membrane potential as external driving force in 2 voltage-dependent steps. This Xenopus tropicalis (Western clawed frog) protein is Mitochondrial import inner membrane translocase subunit Tim22 (timm22).